A 51-amino-acid chain; its full sequence is Otoconin-90 (51 aa).

Belongs to the phospholipase A2 family. In terms of assembly, interacts with OTOL1.

Its subcellular location is the secreted. Its function is as follows. Major protein of the otoconia, a calcium carbonate structure in the saccule and utricle of the ear. Together with OTOL1, acts as a scaffold for otoconia biomineralization: sequesters calcium and forms interconnecting fibrils between otoconia that are incorporated into the calcium crystal structure. Together with OTOL1, modulates calcite crystal morphology and growth kinetics. It is unlikely that this protein has phospholipase A2 activity. This is Otoconin-90 (OC90) from Cavia porcellus (Guinea pig).